The chain runs to 185 residues: Ribosome-recycling factor (185 aa).

This sequence belongs to the RRF family.

It is found in the cytoplasm. Its function is as follows. Responsible for the release of ribosomes from messenger RNA at the termination of protein biosynthesis. May increase the efficiency of translation by recycling ribosomes from one round of translation to another. The sequence is that of Ribosome-recycling factor from Chromobacterium violaceum (strain ATCC 12472 / DSM 30191 / JCM 1249 / CCUG 213 / NBRC 12614 / NCIMB 9131 / NCTC 9757 / MK).